The sequence spans 513 residues: Dentin matrix acidic phosphoprotein 1 (513 aa).

An N-terminal signal peptide occupies residues 1–16; sequence MKISILLMFLWGLSCA. The interval 23–513 is disordered; the sequence is QNNESEDSEE…QDDNDCQDGY (491 aa). N-linked (GlcNAc...) asparagine glycosylation occurs at Asn-25. Residues 46–60 are compositionally biased toward low complexity; the sequence is ESSESSEGSKVSSEE. A compositionally biased stretch (acidic residues) spans 101-119; the sequence is DKDDDEDDSGDDTFGDDDS. Residues 143 to 162 show a composition bias toward polar residues; the sequence is TIQASEESAPQGQDSAQDTT. Positions 163–180 are enriched in basic and acidic residues; it reads SESRELDNEDRVDSKPEG. The segment covering 208–220 has biased composition (acidic residues); it reads SELDDEGMQSDDP. Positions 245–257 are enriched in polar residues; it reads NSEQANTQDSGGS. The span at 275-287 shows a compositional bias: acidic residues; sequence EEDDRSELDDNNT. A glycan (N-linked (GlcNAc...) asparagine) is linked at Asn-285. A compositionally biased stretch (polar residues) spans 296 to 307; it reads TENSNSRDTGLS. The segment covering 309-325 has biased composition (basic and acidic residues); that stretch reads PRRDSKGDSQEDSKENL. 3 N-linked (GlcNAc...) asparagine glycosylation sites follow: Asn-324, Asn-345, and Asn-351. The span at 337 to 354 shows a compositional bias: low complexity; sequence SSESSQEANLSSQENSSE. Residues 364 to 366 carry the Cell attachment site motif; the sequence is RGD. Positions 376–386 are enriched in acidic residues; that stretch reads EDQEDSDSSEE. N-linked (GlcNAc...) asparagine glycans are attached at residues Asn-413 and Asn-426. Positions 417–426 are enriched in acidic residues; that stretch reads ESPESPEDEN. A compositionally biased stretch (low complexity) spans 427–442; sequence SSSQEGLQSHSSSAES. A glycan (N-linked (GlcNAc...) asparagine) is linked at Asn-467. Residues 484 to 502 show a composition bias toward basic and acidic residues; that stretch reads IEIESRKLTVDAYHNKPIG. The span at 503 to 513 shows a compositional bias: acidic residues; it reads DQDDNDCQDGY.

Interacts with importin alpha. Phosphorylated in the cytosol and extracellular matrix and unphosphorylated in the nucleus. Phosphorylation is necessary for nucleocytoplasmic transport and may be catalyzed by a nuclear isoform of CK2 and can be augmented by calcium. Phosphorylated (in vitro) by FAM20C in the extracellular medium at sites within the S-x-E/pS motif. Expressed in tooth particularly in odontoblast, ameloblast and cementoblast.

The protein resides in the nucleus. The protein localises to the cytoplasm. Its subcellular location is the secreted. It localises to the extracellular space. It is found in the extracellular matrix. Functionally, may have a dual function during osteoblast differentiation. In the nucleus of undifferentiated osteoblasts, unphosphorylated form acts as a transcriptional component for activation of osteoblast-specific genes like osteocalcin. During the osteoblast to osteocyte transition phase it is phosphorylated and exported into the extracellular matrix, where it regulates nucleation of hydroxyapatite. The protein is Dentin matrix acidic phosphoprotein 1 (DMP1) of Homo sapiens (Human).